The primary structure comprises 517 residues: Argininosuccinate lyase, chloroplastic (517 aa).

The N-terminal 45 residues, 1–45 (MGAIDLSFSQSLLFSSSRSNLSSSTHRSVSFLPPGSKSRCLPPLR), are a transit peptide targeting the chloroplast. 2-(N(omega)-L-arginino)succinate-binding residues include Ser79, Asn166, and Thr211. The active-site Proton acceptor is the His212. The active-site Proton donor is Ser333. Asn341, Tyr373, Gln378, and Lys381 together coordinate 2-(N(omega)-L-arginino)succinate.

It belongs to the lyase 1 family. Argininosuccinate lyase subfamily.

The protein localises to the plastid. It localises to the chloroplast. The catalysed reaction is 2-(N(omega)-L-arginino)succinate = fumarate + L-arginine. The protein operates within amino-acid biosynthesis; L-arginine biosynthesis; L-arginine from L-ornithine and carbamoyl phosphate: step 3/3. The polypeptide is Argininosuccinate lyase, chloroplastic (Arabidopsis thaliana (Mouse-ear cress)).